The sequence spans 334 residues: AT-hook motif nuclear-localized protein 2 (334 aa).

Residues 1–21 (METTGEVVKTTTGSDGGVTVV) show a composition bias toward low complexity. Disordered regions lie at residues 1 to 103 (METT…PTTS) and 109 to 128 (STTS…PSSF). A compositionally biased stretch (pro residues) spans 44–54 (SVAPPPPPPPQ). The span at 71–80 (IKKRRGRPRK) shows a compositional bias: basic residues. A Bipartite nuclear localization signal motif is present at residues 72–80 (KKRRGRPRK). The segment at residues 72–84 (KKRRGRPRKYGHD) is a DNA-binding region (a.T hook). The segment covering 90–103 (LSPNPISSAAPTTS) has biased composition (polar residues). The PPC domain maps to 147 to 287 (AANFTPHIIT…PHNHNFMSSP (141 aa)). Residues 306-319 (SSLPISTWTPSFPS) show a composition bias toward polar residues. The tract at residues 306–334 (SSLPISTWTPSFPSDSRHKHSHDFNITLT) is disordered.

It is found in the nucleus. In terms of biological role, transcription factor that specifically binds AT-rich DNA sequences related to the nuclear matrix attachment regions (MARs). The sequence is that of AT-hook motif nuclear-localized protein 2 from Arabidopsis thaliana (Mouse-ear cress).